The sequence spans 1314 residues: Condensin-2 complex subunit CAP-D3 (1314 aa).

10 HEAT repeats span residues 20 to 58 (ESDY…SFLR), 98 to 136 (PIAF…KKRG), 184 to 222 (KSLV…GVLN), 231 to 267 (TAAE…SLAK), 269 to 310 (NPEL…AMEV), 331 to 360 (RVLA…GLKD), 361 to 398 (SWGL…FLSG), 417 to 455 (SEGK…LMGG), 457 to 493 (FDGS…ICTD), and 494 to 532 (EIVT…ERIL). The disordered stretch occupies residues 116–150 (DDSAGQGSNSQREKGNKKKRGRGKRNLGYEDGEET). The segment covering 130 to 140 (GNKKKRGRGKR) has biased composition (basic residues). Positions 789–796 (SRRSKRLD) match the Nuclear localization signal motif. HEAT repeat units lie at residues 821–859 (SADT…KQKA), 878–916 (GKLA…VHYT), 917–954 (AMIE…RDYV), 956–992 (WRGV…VKAP), 1053–1091 (QMAP…SVLQ), and 1138–1179 (KGLI…DYKN). Disordered regions lie at residues 1210 to 1237 (MANQ…ENVR) and 1265 to 1314 (VNGG…DDES).

In terms of assembly, component of the condensin-2 complex. As to expression, present in buds.

It localises to the nucleus. It is found in the chromosome. Its function is as follows. Regulatory subunit of the condensin-2 complex, a complex which establishes mitotic chromosome architecture and is involved in physical rigidity of the chromatid axis. May promote the resolution of double-strand DNA catenanes (intertwines) between sister chromatids. Required for plant vigor, fertility, chromatin condensation and sister chromatid cohesion both during mitosis and meiosis. Necessary to maintain normal structural integrity of the meiotic chromosomes during the two nuclear divisions of gametogenesis, especially to prevent interchromosome connections at metaphase I. Seems also involved in crossover formation during meiotic prophase I. Prevents centromeric and pericentromeric heterochromatin repeats association. This Arabidopsis thaliana (Mouse-ear cress) protein is Condensin-2 complex subunit CAP-D3.